Consider the following 464-residue polypeptide: F-box/FBD/LRR-repeat protein At1g80470 (464 aa).

The 48-residue stretch at 15–62 folds into the F-box domain; the sequence is DWISGLADDLLLQILSKVPTRESVFTSRMSKRWRNLWRHVPALDLDSS. LRR repeat units follow at residues 96–122, 123–150, 152–178, 197–222, 223–249, and 273–298; these read EEHC…TILS, KVNI…TLYS, VFDA…KFDG, IITH…KLES, MRED…SITD, and DAED…TISA. Residues 359-413 form the FBD domain; sequence KEEINLSLVPHCFESSLEYVQLKVPITVSETSSKMELAIYFVRNCSVLKKLMLNE.

This Arabidopsis thaliana (Mouse-ear cress) protein is F-box/FBD/LRR-repeat protein At1g80470.